Reading from the N-terminus, the 492-residue chain is Ketol-acid reductoisomerase (NADP(+)) (492 aa).

The 194-residue stretch at 15-208 folds into the KARI N-terminal Rossmann domain; the sequence is AQLGKCRFMA…GGHRAGVLEF (194 aa). Residues 45–48, R68, R76, S78, and 108–110 contribute to the NADP(+) site; these read CGAQ and DKQ. Residue H132 is part of the active site. An NADP(+)-binding site is contributed by G158. KARI C-terminal knotted domains are found at residues 209 to 344 and 345 to 485; these read SFVA…NAPQ and FEGK…MTDM. Residues D217, E221, E389, and E393 each contribute to the Mg(2+) site. S414 is a substrate binding site.

This sequence belongs to the ketol-acid reductoisomerase family. The cofactor is Mg(2+).

It catalyses the reaction (2R)-2,3-dihydroxy-3-methylbutanoate + NADP(+) = (2S)-2-acetolactate + NADPH + H(+). It carries out the reaction (2R,3R)-2,3-dihydroxy-3-methylpentanoate + NADP(+) = (S)-2-ethyl-2-hydroxy-3-oxobutanoate + NADPH + H(+). It functions in the pathway amino-acid biosynthesis; L-isoleucine biosynthesis; L-isoleucine from 2-oxobutanoate: step 2/4. It participates in amino-acid biosynthesis; L-valine biosynthesis; L-valine from pyruvate: step 2/4. In terms of biological role, involved in the biosynthesis of branched-chain amino acids (BCAA). Catalyzes an alkyl-migration followed by a ketol-acid reduction of (S)-2-acetolactate (S2AL) to yield (R)-2,3-dihydroxy-isovalerate. In the isomerase reaction, S2AL is rearranged via a Mg-dependent methyl migration to produce 3-hydroxy-3-methyl-2-ketobutyrate (HMKB). In the reductase reaction, this 2-ketoacid undergoes a metal-dependent reduction by NADPH to yield (R)-2,3-dihydroxy-isovalerate. This Yersinia pestis bv. Antiqua (strain Antiqua) protein is Ketol-acid reductoisomerase (NADP(+)).